Reading from the N-terminus, the 362-residue chain is Patr class I histocompatibility antigen, A-5 alpha chain (362 aa).

The first 24 residues, 1–24, serve as a signal peptide directing secretion; that stretch reads MQVTAPRTVLLLLSAALALTETWA. The interval 25-114 is alpha-1; sequence GSHSMKYFYT…LRGYYNQSEA (90 aa). Over 25–308 the chain is Extracellular; it reads GSHSMKYFYT…EPSSQSTIPI (284 aa). Residue Asn-110 is glycosylated (N-linked (GlcNAc...) asparagine). An alpha-2 region spans residues 115 to 206; it reads GSHIIQRMYG…ENGKETLQRA (92 aa). Intrachain disulfides connect Cys-125-Cys-188 and Cys-227-Cys-283. Residues 207–298 are alpha-3; sequence DPPKTHVTHH…GLPKPLTLRW (92 aa). Residues 209-295 enclose the Ig-like C1-type domain; sequence PKTHVTHHPI…QHEGLPKPLT (87 aa). Residues 299–308 are connecting peptide; the sequence is EPSSQSTIPI. The helical transmembrane segment at 309–332 threads the bilayer; the sequence is VGIVAGLAVLAVVVIGAVVAAVMC. At 333 to 362 the chain is on the cytoplasmic side; sequence RRKSSGGKGGSYSQAASSDSAQGSDVSLTA. A disordered region spans residues 336–362; sequence SSGGKGGSYSQAASSDSAQGSDVSLTA. Ser-343 carries the phosphoserine modification. The segment covering 343 to 362 has biased composition (low complexity); the sequence is SYSQAASSDSAQGSDVSLTA. A Phosphotyrosine modification is found at Tyr-344. 6 positions are modified to phosphoserine: Ser-345, Ser-349, Ser-350, Ser-352, Ser-356, and Ser-359.

This sequence belongs to the MHC class I family. In terms of assembly, heterodimer of an alpha chain and a beta chain (beta-2-microglobulin).

Its subcellular location is the membrane. In terms of biological role, involved in the presentation of foreign antigens to the immune system. In Pan troglodytes (Chimpanzee), this protein is Patr class I histocompatibility antigen, A-5 alpha chain.